The sequence spans 240 residues: Regulatory protein SdiA (240 aa).

The region spanning 173 to 238 is the HTH luxR-type domain; the sequence is VMTPEMNFSK…QVACYAAATG (66 aa). The segment at residues 197–216 is a DNA-binding region (H-T-H motif); the sequence is SAEIAMILSISENTVNFHQK.

In terms of biological role, activates cell division by specifically increasing transcription from one of the two promoters that lie immediately upstream of the ftsQAZ gene cluster. Activates ydiV expression in response to extracellular autoinducer AI-1 (Vibrio fischeri autoinducer oxoC6). This is Regulatory protein SdiA (sdiA) from Escherichia coli (strain K12).